We begin with the raw amino-acid sequence, 177 residues long: Peptide methionine sulfoxide reductase MsrA (177 aa).

The active site involves C10.

The protein belongs to the MsrA Met sulfoxide reductase family.

It carries out the reaction L-methionyl-[protein] + [thioredoxin]-disulfide + H2O = L-methionyl-(S)-S-oxide-[protein] + [thioredoxin]-dithiol. The catalysed reaction is [thioredoxin]-disulfide + L-methionine + H2O = L-methionine (S)-S-oxide + [thioredoxin]-dithiol. In terms of biological role, has an important function as a repair enzyme for proteins that have been inactivated by oxidation. Catalyzes the reversible oxidation-reduction of methionine sulfoxide in proteins to methionine. The protein is Peptide methionine sulfoxide reductase MsrA of Saccharolobus solfataricus (strain ATCC 35092 / DSM 1617 / JCM 11322 / P2) (Sulfolobus solfataricus).